The sequence spans 113 residues: MQAKAVARTVRIAPRKARLVIDLIRGKQVSEAVAILRHTPKAASPIIEKVLKSAVANAEHNYDMDVNKLVVTEAYVNEGPTLKRFRPRAQGRASAINKRTSHITIVVSEKKEG.

The protein belongs to the universal ribosomal protein uL22 family. As to quaternary structure, part of the 50S ribosomal subunit.

Functionally, this protein binds specifically to 23S rRNA; its binding is stimulated by other ribosomal proteins, e.g. L4, L17, and L20. It is important during the early stages of 50S assembly. It makes multiple contacts with different domains of the 23S rRNA in the assembled 50S subunit and ribosome. In terms of biological role, the globular domain of the protein is located near the polypeptide exit tunnel on the outside of the subunit, while an extended beta-hairpin is found that lines the wall of the exit tunnel in the center of the 70S ribosome. This chain is Large ribosomal subunit protein uL22, found in Anoxybacillus flavithermus (strain DSM 21510 / WK1).